The chain runs to 20 residues: Alkaline phosphatase (20 aa).

Expressed by the venom gland.

It is found in the secreted. It carries out the reaction a phosphate monoester + H2O = an alcohol + phosphate. Its function is as follows. Has hemorrhagic activity. The protein is Alkaline phosphatase of Deinagkistrodon acutus (Hundred-pace snake).